The sequence spans 396 residues: Inhibitory POU protein (396 aa).

The POU-IV box motif lies at 86–95; it reads RAEALAAVDI. The POU-specific domain maps to 222 to 299; it reads DTDTDPRELE…ILQAWLEEAE (78 aa). A disordered region spans residues 302–328; the sequence is AKNKRRDPDAPSVLPAGEKKRKRTSIA. Residues 320–377 constitute a DNA-binding region (homeobox; atypical); sequence KKRKRTSIAAPEKRSLEAYFAVQPRPSGEKIAAIAEKLDLKKNVVRVWFCNQRQKQKR.

It belongs to the POU transcription factor family. Class-4 subfamily. In terms of tissue distribution, coexpressed with vvl in overlapping subsets of neurons in the embryonic central nervous system. Expressed in olfactory neurons.

The protein resides in the nucleus. Modulates gene transcription; simultaneously generates both a specific activator and an inhibitor of gene transcription, capable of modulating two distinct regulatory programs during neural development. Has a role in olfactory behavior. This Drosophila melanogaster (Fruit fly) protein is Inhibitory POU protein (acj6).